A 118-amino-acid polypeptide reads, in one-letter code: Ribonuclease P protein component (118 aa).

Belongs to the RnpA family. As to quaternary structure, consists of a catalytic RNA component (M1 or rnpB) and a protein subunit.

It carries out the reaction Endonucleolytic cleavage of RNA, removing 5'-extranucleotides from tRNA precursor.. Functionally, RNaseP catalyzes the removal of the 5'-leader sequence from pre-tRNA to produce the mature 5'-terminus. It can also cleave other RNA substrates such as 4.5S RNA. The protein component plays an auxiliary but essential role in vivo by binding to the 5'-leader sequence and broadening the substrate specificity of the ribozyme. The polypeptide is Ribonuclease P protein component (Shewanella putrefaciens (strain CN-32 / ATCC BAA-453)).